A 278-amino-acid chain; its full sequence is HTH-type transcriptional regulator TsaQ1/TsaQ2 (278 aa).

The HTH iclR-type domain maps to 19–80; the sequence is VHSLAKGLEI…PRSRKLAMGA (62 aa). Positions 40–59 form a DNA-binding region, H-T-H motif; that stretch reads NQQLVELTGLPKATVSRLTS. An IclR-ED domain is found at 95-266; that stretch reads LQRIARPHME…VQDIQAEMRA (172 aa).

Both copies function as additional regulators for the tsa locus, specifically for tsaT. The polypeptide is HTH-type transcriptional regulator TsaQ1/TsaQ2 (tsaQ1) (Comamonas testosteroni (Pseudomonas testosteroni)).